Here is a 508-residue protein sequence, read N- to C-terminus: MGLPWYRVHTVVLNDPGRLLSVHIMHTALVAGWAGSMALYELAVFDPSDPVLDPMWRQGMFVIPFMTRLGITNSWGGWNITGGTITNPGLWSYEGVAGAHIVFSGLCFLAAIWHWVYWDLEIFCDERTGKPSLDLPKIFGIHLFLSGVACFGFGAFHVTGLYGPGIWVSDPYGLTGKVQPVNPAWGVEGFDPFVPGGIASHHIAAGTLGILAGLFHLSVRPPQRLYKGLRMGNIETVLSSSIAAVFFAAFVVAGTMWYGSATTPIELFGPTRYQWDQGYFQQEIYRRVSAGLAENQSVSEAWSKIPEKLAFYDYIGNNPAKGGLFRAGSMDNGDGIAVGWLGHPVFRNKEGRELFVRRMPTFFETFPVVLVDGDGIVRADVPFRRAESKYSVEQVGVTVEFYGGELNGVSYSDPATVKKYARRAQLGEIFELDRATLKSDGVFRSSPRGWFTFGHASFALLFFFGHIWHGARTLFRDVFAGIDPDLDAQVEFGAFQKLGDPTTKRQAV.

6 helical membrane-spanning segments follow: residues 21-36 (SVHI…WAGS), 101-115 (IVFS…IWHW), 140-156 (GIHL…FGAF), 203-218 (IAAG…FHLS), 237-252 (VLSS…AFVV), and 457-472 (SFAL…HGAR).

It belongs to the PsbB/PsbC family. PsbB subfamily. PSII is composed of 1 copy each of membrane proteins PsbA, PsbB, PsbC, PsbD, PsbE, PsbF, PsbH, PsbI, PsbJ, PsbK, PsbL, PsbM, PsbT, PsbX, PsbY, PsbZ, Psb30/Ycf12, at least 3 peripheral proteins of the oxygen-evolving complex and a large number of cofactors. It forms dimeric complexes. Requires Binds multiple chlorophylls. PSII binds additional chlorophylls, carotenoids and specific lipids. as cofactor.

The protein resides in the plastid. It localises to the chloroplast thylakoid membrane. In terms of biological role, one of the components of the core complex of photosystem II (PSII). It binds chlorophyll and helps catalyze the primary light-induced photochemical processes of PSII. PSII is a light-driven water:plastoquinone oxidoreductase, using light energy to abstract electrons from H(2)O, generating O(2) and a proton gradient subsequently used for ATP formation. The polypeptide is Photosystem II CP47 reaction center protein (Arabis hirsuta (Hairy rock-cress)).